Here is a 150-residue protein sequence, read N- to C-terminus: Large ribosomal subunit protein bL9 (150 aa).

It belongs to the bacterial ribosomal protein bL9 family.

Binds to the 23S rRNA. This Shewanella baltica (strain OS223) protein is Large ribosomal subunit protein bL9.